The primary structure comprises 641 residues: Homeobox protein ceh-38 (641 aa).

Polar residues-rich tracts occupy residues 1-14 (MESS…TNGT) and 28-38 (DPSSTFINNTG). Disordered regions lie at residues 1–79 (MESS…TSSA) and 129–244 (LHVD…GDRM). The segment covering 52 to 79 (TISPHPITPSASTSSATSATEEPATSSA) has biased composition (low complexity). Residues 131–140 (VDSRRRESHD) show a composition bias toward basic and acidic residues. Polar residues-rich tracts occupy residues 167-183 (TPTN…SSLL) and 190-204 (NTIG…TFGS). The segment at residues 308 to 394 (NAEIGDDIYI…TRLAILDMKT (87 aa)) is a DNA-binding region (CUT). Disordered stretches follow at residues 398–428 (NRAS…PVSK), 485–508 (GGNI…VGDT), and 552–641 (FGVS…LAAN). Positions 427 to 486 (SKRPRLVFTDIQKRTLQAIFKETQRPSREMQQTIAEHLRLDLSTVANFFMNARRRSRLGG) form a DNA-binding region, homeobox. Over residues 571–604 (HEDDEELDELNDSELAYEEDVEIGDEEEEDEEQA) the composition is skewed to acidic residues. Residues 613-626 (KVEELEEKTVIKEE) show a composition bias toward basic and acidic residues.

Belongs to the CUT homeobox family. As to expression, expressed in the embryo. After gastrulation, expressed in almost all cells. During larval and adult stages, expressed in the dorsal and ventral nerve cord, head and tail neurons, pharynx, gut and head.

Its subcellular location is the nucleus. Probable DNA-binding regulatory protein involved in cell-fate specification. The polypeptide is Homeobox protein ceh-38 (ceh-38) (Caenorhabditis elegans).